The chain runs to 1366 residues: DNA-directed RNA polymerase subunit beta'' (1366 aa).

Positions 220, 290, 297, and 300 each coordinate Zn(2+).

Belongs to the RNA polymerase beta' chain family. RpoC2 subfamily. In plastids the minimal PEP RNA polymerase catalytic core is composed of four subunits: alpha, beta, beta', and beta''. When a (nuclear-encoded) sigma factor is associated with the core the holoenzyme is formed, which can initiate transcription. It depends on Zn(2+) as a cofactor.

It is found in the plastid. It localises to the chloroplast. The catalysed reaction is RNA(n) + a ribonucleoside 5'-triphosphate = RNA(n+1) + diphosphate. Functionally, DNA-dependent RNA polymerase catalyzes the transcription of DNA into RNA using the four ribonucleoside triphosphates as substrates. The polypeptide is DNA-directed RNA polymerase subunit beta'' (Lemna minor (Common duckweed)).